The sequence spans 165 residues: MAKVEQNDGLVEKLVSVDRVSKVVKGGRIFSFTALTVVGDGNGRVGFGRGKAREVPAAIQKALEAAKRNMITVDLDGATLQHPIIARHGASKVYMQPANEGTGVIAGGAVRAVLESAGVENVLTKCYGSTNPTNVVRATFNGLRDMSSPEKAAAKRGKSVDEILG.

Residues 10 to 73 enclose the S5 DRBM domain; the sequence is LVEKLVSVDR…EAAKRNMITV (64 aa).

This sequence belongs to the universal ribosomal protein uS5 family. Part of the 30S ribosomal subunit. Contacts proteins S4 and S8.

In terms of biological role, with S4 and S12 plays an important role in translational accuracy. Located at the back of the 30S subunit body where it stabilizes the conformation of the head with respect to the body. The sequence is that of Small ribosomal subunit protein uS5 from Psychrobacter sp. (strain PRwf-1).